Reading from the N-terminus, the 1669-residue chain is Dystrophin, isoform B (1669 aa).

Positions 1 to 11 are enriched in pro residues; it reads MTAKPPPPIPP. Disordered regions lie at residues 1-28, 43-243, 327-356, 389-417, and 481-508; these read MTAK…LAPE, RGQQ…SEDA, RAQA…RSTI, GGGG…MPLS, and SGAL…NSSG. Over residues 53 to 62 the composition is skewed to polar residues; it reads SQEQHATNTL. Positions 118-131 are enriched in pro residues; the sequence is GLPPTMRQPPPLPR. Low complexity predominate over residues 132 to 147; the sequence is KPASTQSSAQNSAQSS. The span at 153 to 166 shows a compositional bias: basic and acidic residues; sequence KFKDKPPPPPEKHS. Composition is skewed to low complexity over residues 328 to 347 and 396 to 405; these read AQAQ…SNSQ and STGNAVANSG. Over residues 485 to 500 the composition is skewed to basic and acidic residues; sequence SREELRMRRRSSHDET. Spectrin repeat units lie at residues 541 to 643, 650 to 747, 754 to 883, and 890 to 990; these read QRFE…KQLH, QSFD…NRLE, NALL…HRLD, and RQFQ…KVLC. Residues 827-851 are disordered; that stretch reads VSDTSDTEANHDSDSRYMSAEEQSR. Residues 994–1024 are disordered; it reads AQQTHENGDDGRTTSNSGTIGPLPNLGQSVK. One can recognise a WW domain in the interval 1021 to 1054; the sequence is QSVKPPWERATTAANVPYYIDHERETTHWDHPEM. The ZZ-type zinc finger occupies 1279 to 1335; it reads KHQAKCNICKEYPIVGFRYRCLKCFNFDMCQKCFFFGRNAKNHKLTHPMHEYCTTTT. Zn(2+) contacts are provided by cysteine 1284, cysteine 1287, cysteine 1299, cysteine 1302, cysteine 1308, cysteine 1311, histidine 1321, and histidine 1325. Serine 1379 carries the phosphoserine modification. Disordered stretches follow at residues 1488–1516 and 1559–1669; these read EQSG…GEQG and DEPN…ELQK. 2 stretches are compositionally biased toward polar residues: residues 1497–1509 and 1580–1611; these read NGMQ…MTGL and ALNS…QQNG. Positions 1630-1641 are enriched in acidic residues; it reads QELESINDDLED. Residues 1642–1660 show a composition bias toward low complexity; sequence SSSSNTTNTTTTTTTTATT.

Component of the dystrophin associated protein complex (DAPC). Interacts with Dg, via the Dg WW domain binding sites. Expressed in neuronally derived tissues, mainly the CNS and the brain of stage 16 embryos. Lower level expression is seen in the sensory organs. Expression is absent from the musculature. In larvae, expression is predominant throughout the neuropil and brain and in the eye antennal disks.

It is found in the cell membrane. Its subcellular location is the sarcolemma. The protein localises to the cytoplasm. It localises to the cytoskeleton. Required for the maintenance of appropriate synaptic retrograde communication and the stabilization of muscle cell architecture or physiology. May play a role in anchoring the cytoskeleton to the plasma membrane. In Drosophila melanogaster (Fruit fly), this protein is Dystrophin, isoform B (Dys).